Consider the following 49-residue polypeptide: Splenin (49 aa).

An LEM-like domain is found at 4–47 (LEDPSVLTKEKLKSELVANNVTLPAGEQRKEVYVELYLQHLTAL). The segment at 32 to 36 (RKEVY) is essential for biological activity.

Belongs to the thymopoietin family.

In terms of biological role, hormone of the spleen with pleiotropic actions on prothymocytes, mature T-cells, the nicotinic acetylcholine receptor, and pituitary corticotrophs. The chain is Splenin (SP) from Bos taurus (Bovine).